We begin with the raw amino-acid sequence, 1048 residues long: MAGQDSGNLKTVRLWRDAALRARKLRSNLRQLTLSCPGAGGDPLESPDAPQLVLPANIGDIEVLNLGNNGLEDVPEGLGSALGSLRVLVLRRNRFARLPPAVAELGHHLTELDVSHNRLTILGAEVVSALRELRKLNLSHNQLPALPAQLGALAHLEELDVSFNRLAHLPDSFSCLNHLRTLDVDHNQLTAFPQQLLQLAALEELDVSSNRLRGLPEDISALRALKILWLSGAELGTLPRGFCELASLESLMLDNNGLQALPDEFSRLQRLKMLNLSSNLFEEFPAALLPLAGLEELYLSRNQLTSVPSLIAGLGRLLTLWLDNNRIRYLPDSIVELTGLEELVLQGNQIAVLPDNFGQLSRVGLWKIKDNPLIQPPYEVCMKGIPYIAAYQKELAHSQPAVQPRLKLLLMGHKAAGKTLLRHCLTEDKVEGGQGGGDKEKSYLPFPPLGSKGIEVTSWTADASRGLRFIVYDLAGDESYEVIQPFFLSPGALYVLVVNLATYEPRCFPTTVGSFLHRVGARVPHAVVCIVGTHADLCGERELEEKCLDIHRQIALQEKNDAEGLSHLAKVVDEALARDFELRSASPHAAYYGVSDKNLRRRKAHFQYLLNHRLQILSPVLPVSCRDPLQLQRLRDKLLSVAEHREIFPNLHRVLPRSWQVLEELHFQPPQAQRLWLSWWDSARLGLQAGLTEDRLQSALSYLHESGKLLYFEDSPALKEHVFHNLTRLIDILNVFFQRDASLLLHKLLLGTNGEGEGEGESFPTIAVPSPGQDPLRATQLHHYVEGFLLHGLLPAHIIRLLLKPHVQAQQDLQLLLELLEKMGLCYCLNKPKGKPLNGSAAWYKFPCYVQNEVPHAEAWINGTNLAGQSFVAEQLQIEYSFPFTFPPGLFARYSVQINSHVVHRSDGKFQIFAYRGKVPVVVSYRPAKGVLQPDTLSIASHASLPNIWTAWQAITPLVEELNVLLQEWPGLHYTVHILCSKCLKRGSPNPHAFPGELLSQPRPEGVAEIICPKNGSERVNVALVYPPTPTVISPCSKKNVGEKHRNQ.

Ala2 carries the N-acetylalanine modification. 13 LRR repeats span residues 60–81 (DIEVLNLGNNGLEDVPEGLGSA), 84–105 (SLRVLVLRRNRFARLPPAVAEL), 108–129 (HLTELDVSHNRLTILGAEVVSA), 132–153 (ELRKLNLSHNQLPALPAQLGAL), 155–176 (HLEELDVSFNRLAHLPDSFSCL), 178–199 (HLRTLDVDHNQLTAFPQQLLQL), 201–222 (ALEELDVSSNRLRGLPEDISAL), 224–246 (ALKILWLSGAELGTLPRGFCELA), 247–268 (SLESLMLDNNGLQALPDEFSRL), 270–292 (RLKMLNLSSNLFEEFPAALLPLA), 293–314 (GLEELYLSRNQLTSVPSLIAGL), 316–337 (RLLTLWLDNNRIRYLPDSIVEL), and 339–360 (GLEELVLQGNQIAVLPDNFGQL). A required for interaction with PJA2 region spans residues 60–360 (DIEVLNLGNN…AVLPDNFGQL (301 aa)). The segment at 60 to 645 (DIEVLNLGNN…DKLLSVAEHR (586 aa)) is required for interaction with PPP2R2A. The 247-residue stretch at 399 to 645 (QPAVQPRLKL…DKLLSVAEHR (247 aa)) folds into the Roc domain. Residue Lys597 is modified to N6-acetyllysine.

Interacts with RAF1. Interacts with HSPD1. Interacts with PPP2CA; retains PPP2CA into the cytoplasm and excludes it from the nucleus. Interacts with PPP2R2A; the interaction is direct. Interacts with PJA2. In terms of processing, ubiquitinated. Ubiquitination by PJA2 does not lead MFHAS1 to proteasomal degradation but positively regulates its function in polarization of macrophages.

The protein resides in the cytoplasm. In terms of biological role, probable GTP-binding protein. Functions in innate immunity and more specifically the inflammatory response as a regulator of the Toll-like receptor TLR2 and TLR4 signaling pathways. Negatively regulates the part of the TLR4 signaling pathway that leads to the activation of the transcription factor AP-1. By retaining the phosphatase complex PP2A into the cytoplasm, prevents the dephosphorylation of the AP-1 subunit JUN which is required for proper activation of the transcription factor. Both inhibits and activates the TLR2-dependent signaling pathway. Positively regulates the TLR2 signaling pathway to activate specifically the downstream p38 and JNK MAP kinases and promote the polarization of macrophages toward the pro-inflammatory M1 phenotype. It may also play a role in the regulation of inflammation induced by high glucose through the PKB/AKT signaling pathway. Also involved in erythrocyte differentiation through activation of the ERK1/ERK2 signaling pathway. This is Malignant fibrous histiocytoma-amplified sequence 1 homolog from Mus musculus (Mouse).